The chain runs to 210 residues: MTNLNYQQTHFVMSAPDIRHLPSDRGIEVAFAGRSNAGKSSALNTLTNQKSLARTSKTPGRTQLINLFEVVDGKRLVDLPGYGYAEVPEEMKRKWQRALGEYLEKRQSLQGLVVLMDIRHPLKDLDQQMIQWAVESNIQVLVLLTKADKLASGARKAQLNMVREAVLAFNGDVQVEAFSSLKKQGVDKLRQKLDSWFSELAPVEEIQDGE.

Residues 25-199 (RGIEVAFAGR…RQKLDSWFSE (175 aa)) enclose the EngB-type G domain. Residues 33–40 (GRSNAGKS), 60–64 (GRTQL), 78–81 (DLPG), 145–148 (TKAD), and 178–180 (FSS) contribute to the GTP site. 2 residues coordinate Mg(2+): serine 40 and threonine 62.

This sequence belongs to the TRAFAC class TrmE-Era-EngA-EngB-Septin-like GTPase superfamily. EngB GTPase family. The cofactor is Mg(2+).

Functionally, necessary for normal cell division and for the maintenance of normal septation. The chain is Probable GTP-binding protein EngB from Salmonella paratyphi B (strain ATCC BAA-1250 / SPB7).